Here is a 240-residue protein sequence, read N- to C-terminus: Probable septum site-determining protein MinC (240 aa).

Belongs to the MinC family. Interacts with MinD and FtsZ.

Cell division inhibitor that blocks the formation of polar Z ring septums. Rapidly oscillates between the poles of the cell to destabilize FtsZ filaments that have formed before they mature into polar Z rings. Prevents FtsZ polymerization. This is Probable septum site-determining protein MinC from Acinetobacter baumannii (strain AYE).